The chain runs to 475 residues: Aspartyl/glutamyl-tRNA(Asn/Gln) amidotransferase subunit B (475 aa).

It belongs to the GatB/GatE family. GatB subfamily. Heterotrimer of A, B and C subunits.

It carries out the reaction L-glutamyl-tRNA(Gln) + L-glutamine + ATP + H2O = L-glutaminyl-tRNA(Gln) + L-glutamate + ADP + phosphate + H(+). The catalysed reaction is L-aspartyl-tRNA(Asn) + L-glutamine + ATP + H2O = L-asparaginyl-tRNA(Asn) + L-glutamate + ADP + phosphate + 2 H(+). In terms of biological role, allows the formation of correctly charged Asn-tRNA(Asn) or Gln-tRNA(Gln) through the transamidation of misacylated Asp-tRNA(Asn) or Glu-tRNA(Gln) in organisms which lack either or both of asparaginyl-tRNA or glutaminyl-tRNA synthetases. The reaction takes place in the presence of glutamine and ATP through an activated phospho-Asp-tRNA(Asn) or phospho-Glu-tRNA(Gln). This chain is Aspartyl/glutamyl-tRNA(Asn/Gln) amidotransferase subunit B, found in Bacillus cereus (strain ATCC 10987 / NRS 248).